Here is a 734-residue protein sequence, read N- to C-terminus: Paralemmin-3 (734 aa).

Positions 19–64 (SALYRQRLEVIAEKRRLQEEIGAARRELEEEKLRVERLKRKSLRER) form a coiled coil. Disordered regions lie at residues 62 to 100 (RERWLMDGAAEGPERPEEPASKDPQSPEGQAQARIRNLE) and 114 to 217 (QSAS…LGVS). Basic and acidic residues predominate over residues 73–82 (GPERPEEPAS). A coiled-coil region spans residues 90-116 (GQAQARIRNLEDSLFSLQSQLQLLQSA). Phosphoserine occurs at positions 139, 158, 167, 170, and 172. A compositionally biased stretch (polar residues) spans 186–198 (RPSTEAIGTSSEA). Residue S270 is modified to Phosphoserine. Over residues 297-308 (DVTGESGRDAEA) the composition is skewed to basic and acidic residues. 3 disordered regions span residues 297-347 (DVTG…PGVE), 374-400 (PQGAGSAGEPEALIGAQPRGGEASWEV), and 413-709 (EKGR…YAPA). T311 carries the phosphothreonine modification. Residues 315–336 (RLQEQFEAETCRKEEGASRDSL) are compositionally biased toward basic and acidic residues. A phosphoserine mark is found at S332 and S335. Composition is skewed to basic and acidic residues over residues 413 to 427 (EKGRAEKLGAEREDG), 435 to 452 (TQGREENEAEKVERKDSE), 462 to 484 (DEEKWEVKTTEGEESLEVEKGGE), 494 to 531 (LVTEKKPEGSLETERKGSEMPLDQEKDGEGSLDRESKT), 540 to 561 (IGDKSSLDETKGSKKLLDEKTG), 571 to 582 (EGSKKLLDREAD), 589 to 607 (EVDKTSGAKDDVSPEEQGK), and 630 to 647 (DEPRSEEQGQQEPEKQEG). S451 is subject to Phosphoserine. A Phosphoserine modification is found at S601. S721 carries the phosphoserine modification. S-palmitoyl cysteine attachment occurs at residues C728 and C730. Position 731 is a cysteine methyl ester (C731). A lipid anchor (S-farnesyl cysteine) is attached at C731. Positions 732–734 (VVM) are cleaved as a propeptide — removed in mature form.

The protein belongs to the paralemmin family. As to quaternary structure, interacts with SIGIRR. In terms of processing, palmitoylated on Cys-728 and Cys-730 and prenylated on Cys-731; which is required for membrane association.

The protein localises to the cytoplasm. It is found in the cell membrane. Its function is as follows. ATP-binding protein, which may act as a adapter in the Toll-like receptor (TLR) signaling. The sequence is that of Paralemmin-3 (Palm3) from Mus musculus (Mouse).